The primary structure comprises 669 residues: MSEPEVTSVVDMKSPNISSSCSFFKLKKLSEESLLQPPEKVFDIMYKLGEGSYGSVYKAVHKESSSIVAIKLVPVESDLHEIIKEISIMQQCDSPYVVRYYGSYFKQYDLWICMEYCGAGSVSDIMRLRKKTLTEDEIATILSDTLQGLVYLHLRRKIHRDIKAANILLNTEGYAKLADFGVAGQLTDTMAKRNTVIGTPFWMAPEVIEEIGYDCVADIWSLGITALEMAEGKPPYGEIHPMRAIFMIPQKPPPSFREPDRWSTEFIDFVSKCLVKEPDDRATATELLEHEFIRNAKHRSILKPMLEETCAIREQQRANRSFGGVLAASQAKSLATQENGMQQHITDNAFMEDPGTLVPEKFGEYQQSSASDATMIAHAEQGVDEGTLGPGGLRNLSKAAAPAAASSAASPLDMPAVDSGTMVELESNLGTMVINSDSDDSTTAKNNDDQKPRNRYRPQFLEHFDRKNAGDGRGDEKPIATEYSPAAAEQQQQQQQQQQQQQQDEQHLASGANDLNNWEHNMEMQFQQISAINQYGLQQHQQQQQVLMAYPLMNEQLIALNNQPNLLLSNAAPMGQQGIPAAAPAQPPPAYQNQHMHTQSHAYVEGEFEFLKFLTFDDLNQRLCNIDHEMELEIEQLNKKYNAKRQPIVDAMNAKRKRQQNINNNLIKI.

Phosphoserine is present on residues serine 30 and serine 33. The 252-residue stretch at 42–293 (FDIMYKLGEG…ATELLEHEFI (252 aa)) folds into the Protein kinase domain. Residues 48–56 (LGEGSYGSV) and lysine 71 contribute to the ATP site. Aspartate 161 functions as the Proton acceptor in the catalytic mechanism. Residue threonine 195 is modified to Phosphothreonine; by Tao. A compositionally biased stretch (polar residues) spans 432–445 (MVINSDSDDSTTAK). A disordered region spans residues 432–508 (MVINSDSDDS…QQQQQDEQHL (77 aa)). Over residues 460-479 (FLEHFDRKNAGDGRGDEKPI) the composition is skewed to basic and acidic residues. Residues 490-503 (QQQQQQQQQQQQQQ) are compositionally biased toward low complexity. The SARAH domain occupies 608 to 655 (FEFLKFLTFDDLNQRLCNIDHEMELEIEQLNKKYNAKRQPIVDAMNAK).

The protein belongs to the protein kinase superfamily. STE Ser/Thr protein kinase family. STE20 subfamily. In terms of assembly, homodimer. Interacts with Sav and Wts. Interacts (via SARAH domain) with Ex. Interacts with Kibra. Post-translationally, autophosphorylated. As to expression, expressed in CNS during embryogenesis. In third instar larvae, it is expressed throughout all imaginal disks.

It is found in the apical cell membrane. The protein localises to the cytoplasm. The catalysed reaction is L-seryl-[protein] + ATP = O-phospho-L-seryl-[protein] + ADP + H(+). It carries out the reaction L-threonyl-[protein] + ATP = O-phospho-L-threonyl-[protein] + ADP + H(+). Its function is as follows. Plays a key role in the Hippo/SWH (Sav/Wts/Hpo) signaling pathway, a signaling pathway that plays a pivotal role in organ size control and tumor suppression by restricting proliferation and promoting apoptosis. The core of this pathway is composed of a kinase cascade wherein Hippo (Hpo), in complex with its regulatory protein Salvador (Sav), phosphorylates and activates Warts (Wts) in complex with its regulatory protein Mats, which in turn phosphorylates and inactivates the Yorkie (Yki) oncoprotein. The Hippo/SWH signaling pathway inhibits the activity of the transcriptional complex formed by Scalloped (sd) and Yki and the target genes of this pathway include cyclin-E (cycE), diap1 and bantam. Phosphorylates Sav, Wts and Th/DIAP1. Regulates the level of Th/DIAP1 apoptosis inhibitor. This Drosophila melanogaster (Fruit fly) protein is Serine/threonine-protein kinase hippo (hpo).